We begin with the raw amino-acid sequence, 679 residues long: Enzymatic polyprotein (679 aa).

The segment at 40–130 (LHCFVDTGAS…LYEPFIQFTD (91 aa)) is protease. Asp45 is an active-site residue. The Reverse transcriptase domain occupies 272–452 (LKVIKPSKSP…KKINFLGLEI (181 aa)).

This sequence belongs to the caulimoviridae enzymatic polyprotein family.

The catalysed reaction is DNA(n) + a 2'-deoxyribonucleoside 5'-triphosphate = DNA(n+1) + diphosphate. In terms of biological role, encodes for at least two polypeptides: protease (PR) and reverse transcriptase (RT). The protease processes the polyprotein in cis. Reverse transcriptase is multifunctional enzyme that converts the viral RNA genome into dsDNA in viral cytoplasmic capsids. This enzyme displays a DNA polymerase activity that can copy either DNA or RNA templates, and a ribonuclease H (RNase H) activity that cleaves the RNA strand of RNA-DNA heteroduplexes in a partially processive 3'- to 5'-endonucleasic mode. Neo-synthesized pregenomic RNA (pgRNA) are encapsidated, and reverse-transcribed inside the nucleocapsid. Partial (+)DNA is synthesized from the (-)DNA template and generates the relaxed circular DNA (RC-DNA) genome. After budding and infection, the RC-DNA migrates in the nucleus, and is converted into a plasmid-like covalently closed circular DNA (cccDNA). This Cauliflower mosaic virus (strain BBC) (CaMV) protein is Enzymatic polyprotein.